The following is a 196-amino-acid chain: dTDP-4-dehydro-6-deoxyglucose 3-epimerase (196 aa).

Substrate is bound by residues Arg21, Glu26, 45–47 (QVN), and Arg57. The Proton acceptor role is filled by His60. Residues Lys70 and Arg117 each coordinate substrate. The Proton donor role is filled by Tyr130. Positions 141 and 166 each coordinate substrate.

The protein belongs to the dTDP-4-dehydrorhamnose 3,5-epimerase family. In terms of assembly, homodimer.

It carries out the reaction dTDP-4-dehydro-6-deoxy-alpha-D-glucose = dTDP-4-dehydro-6-deoxy-alpha-D-allose. Its pathway is antibiotic biosynthesis. Functionally, involved in the biosynthesis of dTDP-6-deoxy-D-allose, an intermediate in the biosynthesis of mycinose, which is one of the two unusual sugars attached to the 16-membered macrolactone ring of the aglycone antibiotic chalcomycin. Catalyzes the conversion of dTDP-4-oxo-6-deoxyglucose to dTDP-4-oxo-6-deoxyallose, via a C-3 epimerization. This Streptomyces bikiniensis protein is dTDP-4-dehydro-6-deoxyglucose 3-epimerase.